A 326-amino-acid polypeptide reads, in one-letter code: Pectate lyase plyB (326 aa).

The N-terminal stretch at 1-15 (MRFTPLFLLAAVAIA) is a signal peptide. Residues Asp133, Asp162, and Asp166 each contribute to the Ca(2+) site. The active site involves Arg219.

The protein belongs to the polysaccharide lyase 1 family. Ca(2+) serves as cofactor.

It is found in the secreted. It carries out the reaction Eliminative cleavage of (1-&gt;4)-alpha-D-galacturonan to give oligosaccharides with 4-deoxy-alpha-D-galact-4-enuronosyl groups at their non-reducing ends.. It functions in the pathway glycan metabolism; pectin degradation; 2-dehydro-3-deoxy-D-gluconate from pectin: step 2/5. Pectinolytic enzyme consist of four classes of enzymes: pectin lyase, polygalacturonase, pectin methylesterase and rhamnogalacturonase. Among pectinolytic enzymes, pectin lyase is the most important in depolymerization of pectin, since it cleaves internal glycosidic bonds of highly methylated pectins. The chain is Pectate lyase plyB (plyB) from Emericella nidulans (strain FGSC A4 / ATCC 38163 / CBS 112.46 / NRRL 194 / M139) (Aspergillus nidulans).